A 299-amino-acid polypeptide reads, in one-letter code: Riboflavin transporter ImpX (299 aa).

2 consecutive EamA domains span residues 6–144 (KGAL…YLLT) and 162–294 (SLYS…SIIK). The next 10 membrane-spanning stretches (helical) occupy residues 7–27 (GALLVCLAATMWGFDGIALTP), 34–54 (VPFVVFILHLLPLILMSILFG), 68–88 (DLFFFFCVALFGGCLGTLCIV), 101–121 (VVTLLQKLQPIFAIILARLLL), 129–149 (YLFWGFLALLGGYLLTFEFHL), 158–178 (LLPASLYSLLAAFSFGSATVF), 202–222 (IMFVIVTFTSGFGDFLVATAG), 224–244 (WLIFVIIALTTGSGAILLYYF), 253–273 (VATMCELCFPISSVVFDYLIN), and 276–296 (VLSPVQIASAILMIISIIKIS).

It belongs to the EamA transporter family.

The protein resides in the cell membrane. Transports riboflavin into the cell. This is Riboflavin transporter ImpX from Fusobacterium nucleatum subsp. nucleatum (strain ATCC 23726 / VPI 4351).